Here is a 326-residue protein sequence, read N- to C-terminus: Polycomb complex protein BMI-1-A (326 aa).

The RING-type zinc-finger motif lies at 18–57; sequence CVLCGGYFIDATTIIECLHSFCKTCIVRYLETSKYCPICD. Residues 81–95 carry the Nuclear localization signal motif; it reads KLVPGLFKGEMKRRR. 2 disordered regions span residues 239 to 262 and 274 to 326; these read NPHT…DKAG and CIPS…ISSG. Over residues 290 to 303 the composition is skewed to low complexity; sequence ISSTINGTSSSSSS.

Component of a PRC1-like complex. Interacts with cbx4.

The protein resides in the nucleus. Its function is as follows. Component of a Polycomb group (PcG) multiprotein PRC1-like complex, a complex class required to maintain the transcriptionally repressive state of many genes, including Hox genes, throughout development. PcG PRC1 complex acts via chromatin remodeling and modification of histones; it mediates monoubiquitination of histone H2A 'Lys-119', rendering chromatin heritably changed in its expressibility. In the PRC1 complex, it is required to stimulate the E3 ubiquitin-protein ligase activity of rnf2. The chain is Polycomb complex protein BMI-1-A (bmi1a) from Xenopus laevis (African clawed frog).